The sequence spans 558 residues: 2-hydroxy-7-methoxy-5-methyl-1-naphthoate--CoA ligase (558 aa).

ATP contacts are provided by residues 212-213, 329-331, valine 351, aspartate 435, arginine 450, and lysine 542; these read GG and ASR.

It belongs to the ATP-dependent AMP-binding enzyme family.

It catalyses the reaction 2-hydroxy-7-methoxy-5-methyl-1-naphthoate + ATP + CoA = 2-hydroxy-7-methoxy-5-methyl-1-naphthoyl-CoA + AMP + diphosphate. It functions in the pathway antibiotic biosynthesis. In terms of biological role, catalyzes the activation of 2-hydroxy-7-methoxy-5-methyl-1-naphthoate in the biosynthesis of the naphthoate moiety of the neocarzinostatin chromophore. Also catalyzes the activation of other 1-naphthoic acid analogs such as 2-hydroxy-5-methyl-1-naphthoate or 2,7-dihydroxy-5-methyl-1-naphthoate in vitro. The sequence is that of 2-hydroxy-7-methoxy-5-methyl-1-naphthoate--CoA ligase from Streptomyces carzinostaticus.